We begin with the raw amino-acid sequence, 573 residues long: ATP-dependent RNA helicase RhlB (573 aa).

Positions 9–37 (LTFSSFDLHPALVAGLESAGFTRCTPIQA) match the Q motif motif. In terms of domain architecture, Helicase ATP-binding spans 40 to 220 (LPVALPGGDV…YEHMNEPEKL (181 aa)). 53–60 (AQTGTGKT) is an ATP binding site. The DEAD box motif lies at 166-169 (DEAD). A Helicase C-terminal domain is found at 231-393 (RVRQRIYFPS…PVTTELLTPL (163 aa)). Low complexity predominate over residues 391–400 (TPLPRTPRAT). The tract at residues 391–559 (TPLPRTPRAT…AKPSGSPSLL (169 aa)) is disordered. The segment covering 402-411 (EGEEVDDDAG) has biased composition (acidic residues). The segment covering 419-432 (REAREQRAADEARR) has biased composition (basic and acidic residues). Residues 435-449 (GRSGPGGASRSGSGG) show a composition bias toward gly residues. Positions 450–461 (GRRDGAGADGKP) are enriched in basic and acidic residues. A compositionally biased stretch (low complexity) spans 476 to 499 (PAAAPSETPVVVAAAAETPAVTAA). The segment covering 505-514 (PRKRRRRRNG) has biased composition (basic residues). Composition is skewed to low complexity over residues 516 to 528 (PVEG…ASTP) and 541 to 559 (VVAK…PSLL).

This sequence belongs to the DEAD box helicase family. RhlB subfamily. In terms of assembly, component of the RNA degradosome, which is a multiprotein complex involved in RNA processing and mRNA degradation.

Its subcellular location is the cytoplasm. It carries out the reaction ATP + H2O = ADP + phosphate + H(+). Its function is as follows. DEAD-box RNA helicase involved in RNA degradation. Has RNA-dependent ATPase activity and unwinds double-stranded RNA. The sequence is that of ATP-dependent RNA helicase RhlB from Xanthomonas campestris pv. campestris (strain B100).